The following is a 401-amino-acid chain: Riboflavin biosynthesis protein RibBA (401 aa).

The segment at 1 to 203 (MTDFQFSKVE…IQQLQEYRRK (203 aa)) is DHBP synthase. Residues 30–31 (RE), D35, 142–146 (RNGHT), and E166 each bind D-ribulose 5-phosphate. Residue E31 participates in Mg(2+) binding. Residue H145 participates in Mg(2+) binding. The GTP cyclohydrolase II stretch occupies residues 204–401 (HDSLVKQISV…QIKMGHMFNF (198 aa)). 254–258 (RIHSE) serves as a coordination point for GTP. Residues C259, C270, and C272 each contribute to the Zn(2+) site. Residues Q275, 297–299 (EGR), and T319 each bind GTP. Residue D331 is the Proton acceptor; for GTP cyclohydrolase activity of the active site. R333 acts as the Nucleophile; for GTP cyclohydrolase activity in catalysis. Residues T354 and K359 each contribute to the GTP site.

The protein in the N-terminal section; belongs to the DHBP synthase family. It in the C-terminal section; belongs to the GTP cyclohydrolase II family. Mg(2+) is required as a cofactor. Mn(2+) serves as cofactor. Requires Zn(2+) as cofactor.

It catalyses the reaction D-ribulose 5-phosphate = (2S)-2-hydroxy-3-oxobutyl phosphate + formate + H(+). The enzyme catalyses GTP + 4 H2O = 2,5-diamino-6-hydroxy-4-(5-phosphoribosylamino)-pyrimidine + formate + 2 phosphate + 3 H(+). The protein operates within cofactor biosynthesis; riboflavin biosynthesis; 2-hydroxy-3-oxobutyl phosphate from D-ribulose 5-phosphate: step 1/1. It functions in the pathway cofactor biosynthesis; riboflavin biosynthesis; 5-amino-6-(D-ribitylamino)uracil from GTP: step 1/4. In terms of biological role, catalyzes the conversion of D-ribulose 5-phosphate to formate and 3,4-dihydroxy-2-butanone 4-phosphate. Functionally, catalyzes the conversion of GTP to 2,5-diamino-6-ribosylamino-4(3H)-pyrimidinone 5'-phosphate (DARP), formate and pyrophosphate. The polypeptide is Riboflavin biosynthesis protein RibBA (Actinobacillus pleuropneumoniae serotype 3 (strain JL03)).